Consider the following 69-residue polypeptide: Conotoxin Eb6.1 (69 aa).

An N-terminal signal peptide occupies residues 1 to 17; the sequence is VLIIAVLFLTACQLTTA. Residues 18–41 constitute a propeptide that is removed on maturation; that stretch reads ETYSRGRQKHRARRSTDKNSKWTR. 3 disulfides stabilise this stretch: C43–C57, C50–C61, and C56–C68.

This sequence belongs to the conotoxin O1 superfamily. In terms of tissue distribution, expressed by the venom duct.

The protein localises to the secreted. The sequence is that of Conotoxin Eb6.1 (E1) from Conus ebraeus (Hebrew cone).